Reading from the N-terminus, the 104-residue chain is Pterin-4-alpha-carbinolamine dehydratase (104 aa).

An N-acetylalanine modification is found at Ala2. Residues 61-63 (DHH) and 78-81 (STHE) each bind substrate.

The protein belongs to the pterin-4-alpha-carbinolamine dehydratase family. Homotetramer and homodimer. In terms of tissue distribution, the major tissues expressing cDcoH are hypothalamus, kidney and liver.

The protein resides in the cytoplasm. It is found in the nucleus. The enzyme catalyses (4aS,6R)-4a-hydroxy-L-erythro-5,6,7,8-tetrahydrobiopterin = (6R)-L-erythro-6,7-dihydrobiopterin + H2O. Functionally, involved in tetrahydrobiopterin biosynthesis. Seems to both prevent the formation of 7-pterins and accelerate the formation of quinonoid-BH2. Coactivator for HNF1A-dependent transcription. Regulates the dimerization of homeodomain protein HNF1A and enhances its transcriptional activity. Also acts as a coactivator for HNF1B-dependent transcription. This Gallus gallus (Chicken) protein is Pterin-4-alpha-carbinolamine dehydratase (PCBD1).